The primary structure comprises 270 residues: Phosphatidylglycerol--prolipoprotein diacylglyceryl transferase (270 aa).

The next 4 membrane-spanning stretches (helical) occupy residues 19–39, 53–73, 92–112, and 117–137; these read FPVY…LWLA, FVDL…AYYV, QGGL…IIYA, and ISFW…QAIG. Arginine 138 serves as a coordination point for a 1,2-diacyl-sn-glycero-3-phospho-(1'-sn-glycerol). The next 3 helical transmembrane spans lie at 178-198, 206-226, and 236-256; these read HPTF…LLLL, GELF…VEEL, and LRIA…FIIV.

It belongs to the Lgt family.

It is found in the cell membrane. It catalyses the reaction L-cysteinyl-[prolipoprotein] + a 1,2-diacyl-sn-glycero-3-phospho-(1'-sn-glycerol) = an S-1,2-diacyl-sn-glyceryl-L-cysteinyl-[prolipoprotein] + sn-glycerol 1-phosphate + H(+). It participates in protein modification; lipoprotein biosynthesis (diacylglyceryl transfer). Its function is as follows. Catalyzes the transfer of the diacylglyceryl group from phosphatidylglycerol to the sulfhydryl group of the N-terminal cysteine of a prolipoprotein, the first step in the formation of mature lipoproteins. The protein is Phosphatidylglycerol--prolipoprotein diacylglyceryl transferase of Bacillus cytotoxicus (strain DSM 22905 / CIP 110041 / 391-98 / NVH 391-98).